Here is a 97-residue protein sequence, read N- to C-terminus: UPF0235 protein APP7_1431 (97 aa).

It belongs to the UPF0235 family.

The chain is UPF0235 protein APP7_1431 from Actinobacillus pleuropneumoniae serotype 7 (strain AP76).